The primary structure comprises 159 residues: NADH dehydrogenase [ubiquinone] 1 beta subcomplex subunit 10 (159 aa).

It belongs to the complex I NDUFB10 subunit family. In terms of assembly, complex I is composed of 45 different subunits.

It is found in the mitochondrion inner membrane. Functionally, accessory subunit of the mitochondrial membrane respiratory chain NADH dehydrogenase (Complex I), that is believed not to be involved in catalysis. Complex I functions in the transfer of electrons from NADH to the respiratory chain. The immediate electron acceptor for the enzyme is believed to be ubiquinone. In Bombyx mori (Silk moth), this protein is NADH dehydrogenase [ubiquinone] 1 beta subcomplex subunit 10.